The sequence spans 321 residues: Methionyl-tRNA formyltransferase (321 aa).

111–114 (GLLP) contacts (6S)-5,6,7,8-tetrahydrofolate.

Belongs to the Fmt family.

The catalysed reaction is L-methionyl-tRNA(fMet) + (6R)-10-formyltetrahydrofolate = N-formyl-L-methionyl-tRNA(fMet) + (6S)-5,6,7,8-tetrahydrofolate + H(+). Functionally, attaches a formyl group to the free amino group of methionyl-tRNA(fMet). The formyl group appears to play a dual role in the initiator identity of N-formylmethionyl-tRNA by promoting its recognition by IF2 and preventing the misappropriation of this tRNA by the elongation apparatus. The chain is Methionyl-tRNA formyltransferase from Chlamydia pneumoniae (Chlamydophila pneumoniae).